A 204-amino-acid polypeptide reads, in one-letter code: Ribonuclease HII (204 aa).

One can recognise an RNase H type-2 domain in the interval Val-14 to Leu-203. A divalent metal cation is bound by residues Asp-20, Glu-21, and Asp-112.

This sequence belongs to the RNase HII family. It depends on Mn(2+) as a cofactor. The cofactor is Mg(2+).

It is found in the cytoplasm. It carries out the reaction Endonucleolytic cleavage to 5'-phosphomonoester.. Endonuclease that specifically degrades the RNA of RNA-DNA hybrids. This chain is Ribonuclease HII, found in Thiobacillus denitrificans (strain ATCC 25259 / T1).